We begin with the raw amino-acid sequence, 432 residues long: Enolase (432 aa).

Gln-167 serves as a coordination point for (2R)-2-phosphoglycerate. The active-site Proton donor is Glu-209. Residues Asp-246, Glu-291, and Asp-318 each contribute to the Mg(2+) site. (2R)-2-phosphoglycerate is bound by residues Lys-343, Arg-372, Ser-373, and Lys-394. Lys-343 functions as the Proton acceptor in the catalytic mechanism.

This sequence belongs to the enolase family. As to quaternary structure, component of the RNA degradosome, a multiprotein complex involved in RNA processing and mRNA degradation. Mg(2+) is required as a cofactor.

It is found in the cytoplasm. Its subcellular location is the secreted. The protein localises to the cell surface. It catalyses the reaction (2R)-2-phosphoglycerate = phosphoenolpyruvate + H2O. It functions in the pathway carbohydrate degradation; glycolysis; pyruvate from D-glyceraldehyde 3-phosphate: step 4/5. In terms of biological role, catalyzes the reversible conversion of 2-phosphoglycerate (2-PG) into phosphoenolpyruvate (PEP). It is essential for the degradation of carbohydrates via glycolysis. This is Enolase from Aliivibrio fischeri (strain MJ11) (Vibrio fischeri).